The sequence spans 623 residues: Glutamine--fructose-6-phosphate aminotransferase [isomerizing] (623 aa).

Cys-2 functions as the Nucleophile; for GATase activity in the catalytic mechanism. The 227-residue stretch at 2–228 (CGIVGYIGQA…NDQVVTITAD (227 aa)) folds into the Glutamine amidotransferase type-2 domain. 2 SIS domains span residues 295-435 (IDES…LRGN) and 468-613 (LGRS…VDQP). Residue Lys-618 is the For Fru-6P isomerization activity of the active site.

In terms of assembly, homodimer.

It is found in the cytoplasm. The enzyme catalyses D-fructose 6-phosphate + L-glutamine = D-glucosamine 6-phosphate + L-glutamate. Catalyzes the first step in hexosamine metabolism, converting fructose-6P into glucosamine-6P using glutamine as a nitrogen source. The polypeptide is Glutamine--fructose-6-phosphate aminotransferase [isomerizing] (Corynebacterium efficiens (strain DSM 44549 / YS-314 / AJ 12310 / JCM 11189 / NBRC 100395)).